Reading from the N-terminus, the 373-residue chain is Alpha-N-acetylgalactosaminide alpha-2,6-sialyltransferase 2 (373 aa).

At 1-6 the chain is on the cytoplasmic side; that stretch reads MDLPRR. A helical; Signal-anchor for type II membrane protein transmembrane segment spans residues 7–27; the sequence is WLFRMLLLVATSSGILLMLYS. Over 28-373 the chain is Lumenal; it reads SAGQQSPETQ…NAGILWLYQR (346 aa). Intrachain disulfides connect cysteine 65–cysteine 147 and cysteine 150–cysteine 316. Asparagine 103 is a glycosylation site (N-linked (GlcNAc...) asparagine). Position 155 (asparagine 155) interacts with CMP-N-acetyl-beta-neuraminate. Residue asparagine 160 is glycosylated (N-linked (GlcNAc...) asparagine). Residues asparagine 178, serine 303, and histidine 335 each coordinate CMP-N-acetyl-beta-neuraminate.

This sequence belongs to the glycosyltransferase 29 family. As to expression, highly expressed in lactating mammary gland and adult testis. Lower levels in kidney.

It localises to the golgi apparatus membrane. The enzyme catalyses a beta-D-galactosyl-(1-&gt;3)-N-acetyl-alpha-D-galactosaminyl derivative + CMP-N-acetyl-beta-neuraminate = a beta-D-galactosyl-(1-&gt;3)-[N-acetyl-alpha-neuraminyl-(2-&gt;6)]-N-acetyl-alpha-D-galactosaminyl derivative + CMP + H(+). It catalyses the reaction a 3-O-[N-acetyl-alpha-D-galactosaminyl]-L-threonyl-[protein] + CMP-N-acetyl-beta-neuraminate = a 3-O-[N-acetyl-alpha-neuraminosyl-(2-&gt;6)-N-acetyl-alpha-D-galactosaminyl]-L-threonyl-[protein] + CMP + H(+). It carries out the reaction a 3-O-[N-acetyl-alpha-neuraminyl-(2-&gt;3)-beta-D-galactosyl-(1-&gt;3)-N-acetyl-alpha-D-galactosaminyl]-L-threonyl-[protein] + CMP-N-acetyl-beta-neuraminate = a 3-O-{alpha-Neu5Ac-(2-&gt;3)-beta-D-Gal-(1-&gt;3)-[alpha-Neu5Ac-(2-&gt;6)]-alpha-D-GalNAc}-L-threonyl-[protein] + CMP + H(+). It functions in the pathway protein modification; protein glycosylation. Catalyzes the transfer of N-acetylneuraminyl groups onto glycan chains in glycoproteins. Conjugates sialic acid with an alpha-2-6 linkage to N-acetylgalactosamine (GalNAc) glycan chains linked to serine or threonine in glycoproteins. Sialylates alphaGalNAc- and Galbeta1-&gt;3GalNAc-O-Ser/Thr epitopes also known as Tn and T antigens. The sequence is that of Alpha-N-acetylgalactosaminide alpha-2,6-sialyltransferase 2 (St6galnac2) from Mus musculus (Mouse).